We begin with the raw amino-acid sequence, 507 residues long: Protein DETOXIFICATION 39 (507 aa).

12 helical membrane passes run 58 to 78 (VLFR…GMGI), 92 to 112 (LAAA…MLGM), 141 to 161 (IVLA…YPIL), 178 to 198 (IAGL…QKFL), 209 to 229 (FISA…VYVM), 233 to 253 (FMGI…SQCF), 287 to 307 (AVMI…AGLL), 318 to 338 (SICM…NAAV), 359 to 379 (WTAT…VIWF), 403 to 423 (FLAI…VAVG), 433 to 453 (VNVG…GFTF), and 459 to 479 (GIWT…LYVT).

It belongs to the multi antimicrobial extrusion (MATE) (TC 2.A.66.1) family.

The protein localises to the membrane. This is Protein DETOXIFICATION 39 from Arabidopsis thaliana (Mouse-ear cress).